The sequence spans 376 residues: Queuine tRNA-ribosyltransferase (376 aa).

Asp-89 (proton acceptor) is an active-site residue. Substrate is bound by residues 89 to 93 (DSGGF), Asp-143, Gln-194, and Gly-221. The interval 252–258 (GVGIPSN) is RNA binding. The active-site Nucleophile is the Asp-271. An RNA binding; important for wobble base 34 recognition region spans residues 276–280 (ARNGR). Residues Cys-309, Cys-311, Cys-314, and His-340 each coordinate Zn(2+).

It belongs to the queuine tRNA-ribosyltransferase family. Homodimer. Within each dimer, one monomer is responsible for RNA recognition and catalysis, while the other monomer binds to the replacement base PreQ1. Requires Zn(2+) as cofactor.

The catalysed reaction is 7-aminomethyl-7-carbaguanine + guanosine(34) in tRNA = 7-aminomethyl-7-carbaguanosine(34) in tRNA + guanine. It participates in tRNA modification; tRNA-queuosine biosynthesis. Functionally, catalyzes the base-exchange of a guanine (G) residue with the queuine precursor 7-aminomethyl-7-deazaguanine (PreQ1) at position 34 (anticodon wobble position) in tRNAs with GU(N) anticodons (tRNA-Asp, -Asn, -His and -Tyr). Catalysis occurs through a double-displacement mechanism. The nucleophile active site attacks the C1' of nucleotide 34 to detach the guanine base from the RNA, forming a covalent enzyme-RNA intermediate. The proton acceptor active site deprotonates the incoming PreQ1, allowing a nucleophilic attack on the C1' of the ribose to form the product. After dissociation, two additional enzymatic reactions on the tRNA convert PreQ1 to queuine (Q), resulting in the hypermodified nucleoside queuosine (7-(((4,5-cis-dihydroxy-2-cyclopenten-1-yl)amino)methyl)-7-deazaguanosine). The polypeptide is Queuine tRNA-ribosyltransferase (Clostridium botulinum (strain Kyoto / Type A2)).